A 500-amino-acid polypeptide reads, in one-letter code: MSSFPWLTILVVLPIFAGSLIFFLPHRGNKIVRWYTMSICLLEFLLMTYAFCYHFQLEDPLIQLKEDSKWIDVFNFHWRLGIDGLSLGSILLTGFMTTLATLAAWPVTRNSRLFYFLMLAMYSGQIGLFSSRDLLLFFIMWELELIPVYLLLSMWGGKRRLYSATKFILYTAGGSIFFLIGVLGMGLYGSNEPRLDLERLINQSYPATLEILFYFGFLIAYAVKLPIIPLHTWLPDTHGEAHYSTCMLLAGILLKMGAYGLIRINMELLPHAHYLFSPWLVIIGAMQIIYAASTSLGQRNFKKRIAYSSVSHMGFIIIGIGSITNIGLNGAILQILSHGFIGATLFFLAGTACDRMRLVYLEELGGVSIPMPKIFTMFSSFSMASLALPGMSGFVAELVVFFGLITSPKFLLMPKMLITFVMAIGMILTPIYLLSMLRQMFYGYKLFHVPNENFEDSGPRELFLLICIFLPVIGIGIYPDFVLSLSVDRVEALLSNYYPK.

14 consecutive transmembrane segments (helical) span residues 4–24 (FPWL…IFFL), 37–57 (MSIC…HFQL), 87–107 (LGSI…AWPV), 113–130 (LFYF…GLFS), 134–154 (LLLF…LLSM), 167–187 (FILY…GMGL), 211–231 (ILFY…IPLH), 242–262 (HYST…YGLI), 272–292 (AHYL…IYAA), 313–333 (MGFI…GAIL), 334–354 (QILS…TACD), 386–406 (LALP…GLIT), 417–437 (LITF…LSML), and 462–482 (LFLL…PDFV).

Belongs to the complex I subunit 4 family.

The protein resides in the plastid. The protein localises to the chloroplast thylakoid membrane. It carries out the reaction a plastoquinone + NADH + (n+1) H(+)(in) = a plastoquinol + NAD(+) + n H(+)(out). It catalyses the reaction a plastoquinone + NADPH + (n+1) H(+)(in) = a plastoquinol + NADP(+) + n H(+)(out). The polypeptide is NAD(P)H-quinone oxidoreductase chain 4, chloroplastic (Oryza nivara (Indian wild rice)).